Here is a 186-residue protein sequence, read N- to C-terminus: Holliday junction branch migration complex subunit RuvA (186 aa).

Residues 1 to 63 (MNDYINGFLY…DNHFKYYGFF (63 aa)) are domain I. The domain II stretch occupies residues 64–137 (NQLVRDLFEI…QKELFNNKIS (74 aa)). A region of interest (flexible linker) is located at residue S137. Residues 137–186 (SEKKNKVITSLEKLGYKTKDIYKIIINVDEDLTIDELTKYVLEKLSYINN) are domain III.

This sequence belongs to the RuvA family. Homotetramer. Forms an RuvA(8)-RuvB(12)-Holliday junction (HJ) complex. HJ DNA is sandwiched between 2 RuvA tetramers; dsDNA enters through RuvA and exits via RuvB. An RuvB hexamer assembles on each DNA strand where it exits the tetramer. Each RuvB hexamer is contacted by two RuvA subunits (via domain III) on 2 adjacent RuvB subunits; this complex drives branch migration. In the full resolvosome a probable DNA-RuvA(4)-RuvB(12)-RuvC(2) complex forms which resolves the HJ.

It is found in the cytoplasm. Functionally, the RuvA-RuvB-RuvC complex processes Holliday junction (HJ) DNA during genetic recombination and DNA repair, while the RuvA-RuvB complex plays an important role in the rescue of blocked DNA replication forks via replication fork reversal (RFR). RuvA specifically binds to HJ cruciform DNA, conferring on it an open structure. The RuvB hexamer acts as an ATP-dependent pump, pulling dsDNA into and through the RuvAB complex. HJ branch migration allows RuvC to scan DNA until it finds its consensus sequence, where it cleaves and resolves the cruciform DNA. This chain is Holliday junction branch migration complex subunit RuvA, found in Mycoplasma capricolum subsp. capricolum (strain California kid / ATCC 27343 / NCTC 10154).